Consider the following 539-residue polypeptide: GMP synthase [glutamine-hydrolyzing] (539 aa).

In terms of domain architecture, Glutamine amidotransferase type-1 spans 4 to 202 (KILILDFGSQ…VLQIAGCKPD (199 aa)). Cys-81 acts as the Nucleophile in catalysis. Active-site residues include His-176 and Glu-178. The GMPS ATP-PPase domain occupies 203–395 (WVMRDHIEEA…LGLPPEMVYR (193 aa)). 230–236 (SGGVDSS) provides a ligand contact to ATP.

Homodimer.

The enzyme catalyses XMP + L-glutamine + ATP + H2O = GMP + L-glutamate + AMP + diphosphate + 2 H(+). The protein operates within purine metabolism; GMP biosynthesis; GMP from XMP (L-Gln route): step 1/1. In terms of biological role, catalyzes the synthesis of GMP from XMP. The sequence is that of GMP synthase [glutamine-hydrolyzing] from Cupriavidus taiwanensis (strain DSM 17343 / BCRC 17206 / CCUG 44338 / CIP 107171 / LMG 19424 / R1) (Ralstonia taiwanensis (strain LMG 19424)).